We begin with the raw amino-acid sequence, 318 residues long: Thymidylate synthase (318 aa).

Residues arginine 25 and arginine 180–arginine 181 each bind dUMP. Cysteine 200 serves as the catalytic Nucleophile. Residues arginine 220–aspartate 223, asparagine 231, and histidine 261–tyrosine 263 contribute to the dUMP site. Aspartate 223 is a binding site for (6R)-5,10-methylene-5,6,7,8-tetrahydrofolate. Alanine 317 contacts (6R)-5,10-methylene-5,6,7,8-tetrahydrofolate.

The protein belongs to the thymidylate synthase family. Bacterial-type ThyA subfamily. In terms of assembly, homodimer.

It localises to the cytoplasm. It catalyses the reaction dUMP + (6R)-5,10-methylene-5,6,7,8-tetrahydrofolate = 7,8-dihydrofolate + dTMP. It functions in the pathway pyrimidine metabolism; dTTP biosynthesis. Its function is as follows. Catalyzes the reductive methylation of 2'-deoxyuridine-5'-monophosphate (dUMP) to 2'-deoxythymidine-5'-monophosphate (dTMP) while utilizing 5,10-methylenetetrahydrofolate (mTHF) as the methyl donor and reductant in the reaction, yielding dihydrofolate (DHF) as a by-product. This enzymatic reaction provides an intracellular de novo source of dTMP, an essential precursor for DNA biosynthesis. This chain is Thymidylate synthase, found in Lactobacillus johnsonii (strain CNCM I-12250 / La1 / NCC 533).